A 361-amino-acid polypeptide reads, in one-letter code: Aminomethyltransferase (361 aa).

This sequence belongs to the GcvT family. In terms of assembly, the glycine cleavage system is composed of four proteins: P, T, L and H.

The enzyme catalyses N(6)-[(R)-S(8)-aminomethyldihydrolipoyl]-L-lysyl-[protein] + (6S)-5,6,7,8-tetrahydrofolate = N(6)-[(R)-dihydrolipoyl]-L-lysyl-[protein] + (6R)-5,10-methylene-5,6,7,8-tetrahydrofolate + NH4(+). Functionally, the glycine cleavage system catalyzes the degradation of glycine. This is Aminomethyltransferase from Bacteroides thetaiotaomicron (strain ATCC 29148 / DSM 2079 / JCM 5827 / CCUG 10774 / NCTC 10582 / VPI-5482 / E50).